An 852-amino-acid chain; its full sequence is Leucine--tRNA ligase (852 aa).

The 'HIGH' region signature appears at 51–61; sequence PYPSGDLHMGH. Positions 615-619 match the 'KMSKS' region motif; the sequence is KMSKS. Residue Lys-618 coordinates ATP.

Belongs to the class-I aminoacyl-tRNA synthetase family.

Its subcellular location is the cytoplasm. It catalyses the reaction tRNA(Leu) + L-leucine + ATP = L-leucyl-tRNA(Leu) + AMP + diphosphate. The polypeptide is Leucine--tRNA ligase (Clavibacter sepedonicus (Clavibacter michiganensis subsp. sepedonicus)).